The chain runs to 327 residues: Annexin A8 (327 aa).

Annexin repeat units follow at residues 21-92 (FNPD…ALMY), 93-164 (PPYR…CLLQ), 177-249 (GLAL…TVVK), and 253-324 (NLHG…NLVG). Ca(2+) is bound by residues M266, G268, G270, and D310.

The protein belongs to the annexin family.

Its function is as follows. This protein is an anticoagulant protein that acts as an indirect inhibitor of the thromboplastin-specific complex, which is involved in the blood coagulation cascade. The protein is Annexin A8 (ANXA8) of Bos taurus (Bovine).